The sequence spans 211 residues: Large ribosomal subunit protein uL4 (211 aa).

The segment at 40 to 87 (QQAHTRQGTASTLTRSEVRGGGRKPYKQKGTGRARQGSIRTPLRPGGG) is disordered. Polar residues predominate over residues 41–54 (QAHTRQGTASTLTR). Residues 60–71 (GGRKPYKQKGTG) show a composition bias toward basic residues.

This sequence belongs to the universal ribosomal protein uL4 family. In terms of assembly, part of the 50S ribosomal subunit.

One of the primary rRNA binding proteins, this protein initially binds near the 5'-end of the 23S rRNA. It is important during the early stages of 50S assembly. It makes multiple contacts with different domains of the 23S rRNA in the assembled 50S subunit and ribosome. Its function is as follows. Forms part of the polypeptide exit tunnel. The sequence is that of Large ribosomal subunit protein uL4 from Synechococcus sp. (strain WH7803).